Here is a 413-residue protein sequence, read N- to C-terminus: Alpha-1-antitrypsin-like protein GS55-MS (413 aa).

The first 24 residues, 1 to 24, serve as a signal peptide directing secretion; it reads MPSSISWGLLLLAGLSCLVAGSLA. Residues Asn65, Asn102, and Asn266 are each glycosylated (N-linked (GlcNAc...) asparagine). The tract at residues 368–387 is RCL; that stretch reads GATFLEMMPMSLPPEVKFDK.

It belongs to the serpin family.

The protein localises to the secreted. Inhibitor of serine proteases. Its primary target is elastase, but it also has a moderate affinity for plasmin and thrombin. The sequence is that of Alpha-1-antitrypsin-like protein GS55-MS from Ictidomys tridecemlineatus (Thirteen-lined ground squirrel).